Reading from the N-terminus, the 481-residue chain is ATP synthase subunit beta (481 aa).

Position 154 to 161 (154 to 161 (GGAGVGKT)) interacts with ATP.

The protein belongs to the ATPase alpha/beta chains family. As to quaternary structure, F-type ATPases have 2 components, CF(1) - the catalytic core - and CF(0) - the membrane proton channel. CF(1) has five subunits: alpha(3), beta(3), gamma(1), delta(1), epsilon(1). CF(0) has three main subunits: a(1), b(2) and c(9-12). The alpha and beta chains form an alternating ring which encloses part of the gamma chain. CF(1) is attached to CF(0) by a central stalk formed by the gamma and epsilon chains, while a peripheral stalk is formed by the delta and b chains.

The protein localises to the cell inner membrane. It carries out the reaction ATP + H2O + 4 H(+)(in) = ADP + phosphate + 5 H(+)(out). In terms of biological role, produces ATP from ADP in the presence of a proton gradient across the membrane. The catalytic sites are hosted primarily by the beta subunits. In Novosphingobium aromaticivorans (strain ATCC 700278 / DSM 12444 / CCUG 56034 / CIP 105152 / NBRC 16084 / F199), this protein is ATP synthase subunit beta.